We begin with the raw amino-acid sequence, 274 residues long: Putative septum site-determining protein MinD (274 aa).

22 to 29 (KGGVGKTT) serves as a coordination point for ATP.

It belongs to the ParA family. MinD subfamily.

Its subcellular location is the plastid. It localises to the chloroplast. Its function is as follows. ATPase required for the correct placement of the division site. The protein is Putative septum site-determining protein MinD (minD-A) of Nephroselmis olivacea (Green alga).